The following is a 197-amino-acid chain: Holliday junction branch migration complex subunit RuvA (197 aa).

The segment at 1–65 is domain I; that stretch reads MISQVRGTIM…EDAWHLYGFA (65 aa). The interval 66–140 is domain II; the sequence is HAYERAVFQK…DKIDAVGPAP (75 aa). Residues 140–144 are flexible linker; the sequence is PATGT. Residues 145–197 form a domain III region; sequence APSPLGDDAVRALIALGYNQTEADRAVRAVVESGAPKDVSSLVRGALSRLTAK.

This sequence belongs to the RuvA family. As to quaternary structure, homotetramer. Forms an RuvA(8)-RuvB(12)-Holliday junction (HJ) complex. HJ DNA is sandwiched between 2 RuvA tetramers; dsDNA enters through RuvA and exits via RuvB. An RuvB hexamer assembles on each DNA strand where it exits the tetramer. Each RuvB hexamer is contacted by two RuvA subunits (via domain III) on 2 adjacent RuvB subunits; this complex drives branch migration. In the full resolvosome a probable DNA-RuvA(4)-RuvB(12)-RuvC(2) complex forms which resolves the HJ.

It is found in the cytoplasm. In terms of biological role, the RuvA-RuvB-RuvC complex processes Holliday junction (HJ) DNA during genetic recombination and DNA repair, while the RuvA-RuvB complex plays an important role in the rescue of blocked DNA replication forks via replication fork reversal (RFR). RuvA specifically binds to HJ cruciform DNA, conferring on it an open structure. The RuvB hexamer acts as an ATP-dependent pump, pulling dsDNA into and through the RuvAB complex. HJ branch migration allows RuvC to scan DNA until it finds its consensus sequence, where it cleaves and resolves the cruciform DNA. In Gemmatimonas aurantiaca (strain DSM 14586 / JCM 11422 / NBRC 100505 / T-27), this protein is Holliday junction branch migration complex subunit RuvA.